Here is a 244-residue protein sequence, read N- to C-terminus: Glucosamine-6-phosphate deaminase (244 aa).

Asp67 acts as the Proton acceptor; for enolization step in catalysis. Asn133 functions as the For ring-opening step in the catalytic mechanism. The active-site Proton acceptor; for ring-opening step is His135. Catalysis depends on Glu140, which acts as the For ring-opening step.

The protein belongs to the glucosamine/galactosamine-6-phosphate isomerase family. NagB subfamily.

It carries out the reaction alpha-D-glucosamine 6-phosphate + H2O = beta-D-fructose 6-phosphate + NH4(+). It functions in the pathway amino-sugar metabolism; N-acetylneuraminate degradation; D-fructose 6-phosphate from N-acetylneuraminate: step 5/5. In terms of biological role, catalyzes the reversible isomerization-deamination of glucosamine 6-phosphate (GlcN6P) to form fructose 6-phosphate (Fru6P) and ammonium ion. This Mycoplasma mycoides subsp. mycoides SC (strain CCUG 32753 / NCTC 10114 / PG1) protein is Glucosamine-6-phosphate deaminase.